Consider the following 139-residue polypeptide: Large ribosomal subunit protein eL32 (139 aa).

It belongs to the eukaryotic ribosomal protein eL32 family.

The protein is Large ribosomal subunit protein eL32 (RPL32) of Encephalitozoon cuniculi (strain GB-M1) (Microsporidian parasite).